The chain runs to 761 residues: MSTVEEDSDTVTVETVNSVTFTQDTDGNLILHCPQNDPDEVDSEDSTEPPHKRLCLSSEDDQSIDDATPCISVVALPLSENDQSFEVTMTATTEVADDELSEGTVTQIQILQNDQLDEISPLGTEEVSAVSQAWFTTKEDKDSLTNKGHKWKQGMWSKEEIDILMNNIERYLKARGIKDATEIIFEMSKDERKDFYRTIAWGLNRPLFAVYRRVLRMYDDRNHVGKYTPEEIEKLKELRIKHGNDWATIGAALGRSASSVKDRCRLMKDTCNTGKWTEEEEKRLAEVVHELTSTEPGDIVTQGVSWAAVAERVGTRSEKQCRSKWLNYLNWKQSGGTEWTKEDEINLILRIAELDVADENDINWDLLAEGWSSVRSPQWLRSKWWTIKRQIANHKDVSFPVLIKGLKQLHENQKNNPVLLENKSGSGVPNSNCNSSVQHVQIRVARLEDNTAISPSPMAALQIPVQITHVSSTDSPAASVDSETITLNSGTLQTFEILPSFHLQPTGTPGTYLLQTSSSQGLPLTLTTNPTVTLAAAAPASPEQIIVHALSPEHLLNTSDNVTVQCHTPRVIIQTVATEDITSSLSQEELTVDSDLHSSDFPEPPDALEADTFPDEIPRPKMTIQPSFNNAHVSKFSDQNSTELMNSVMVRTEEEIADTDLKQEEPPSDLASAYVTEDLESPTIVHQVHQTIDDETILIVPSPHGFIQASDVIDTESVLPLTTLTDPIFQHHQEASNIIGSSLGSPVSEDSKDVEDLVNCH.

The interaction with CCND2 stretch occupies residues 1 to 237 (MSTVEEDSDT…TPEEIEKLKE (237 aa)). Positions 24-51 (DTDGNLILHCPQNDPDEVDSEDSTEPPH) are disordered. Residues 37-47 (DPDEVDSEDST) show a composition bias toward acidic residues. The interval 87-170 (VTMTATTEVA…IDILMNNIER (84 aa)) is required for transcriptional activation. Positions 87–458 (VTMTATTEVA…DNTAISPSPM (372 aa)) are required for DNA-binding. The segment at 176–761 (GIKDATEIIF…KDVEDLVNCH (586 aa)) is interaction with CCND1, CCND2 and CCND3. Positions 225–263 (GKYTPEEIEKLKELRIKHGNDWATIGAALGRSASSVKDR) constitute a Myb-like 1 domain. The 66-residue stretch at 268–333 (KDTCNTGKWT…KWLNYLNWKQ (66 aa)) folds into the HTH myb-type domain. The segment at residues 306–329 (WAAVAERVGTRSEKQCRSKWLNYL) is a DNA-binding region (H-T-H motif). Residues 339–388 (WTKEDEINLILRIAELDVADENDINWDLLAEGWSSVRSPQWLRSKWWTIK) enclose the Myb-like 2 domain. The tract at residues 459-761 (AALQIPVQIT…KDVEDLVNCH (303 aa)) is required for transcriptional activation. Disordered regions lie at residues 584–625 (SLSQ…MTIQ) and 740–761 (GSSL…VNCH).

Belongs to the DMTF1 family. In terms of assembly, interacts with the D-type cyclins CCND1, CCND2 and CCND3. Interaction with D-type cyclins may modulate transcriptional activation by this protein. Post-translationally, phosphorylated by the cyclin-D2/CDK4, cyclin-D3/CDK4 and cyclin-D2/CDK6 complexes and to a lesser extent by the cyclin-D1/CDK4 complex. Ubiquitously expressed (at mRNA level). Expressed in brain, intestine, kidney, lung, pancreas, skin, spleen and tongue (at protein level). Expressed at high levels in testis and thymus (at protein level). In all tissues examined, expression is predominant in non-proliferating and differentiated cell types. These include epithelial, interstitial and smooth muscle cells of the intestine, differentiated spermatids, sperm and interstitial cells of the testis, and lymphoid cells of the medullary compartment of the thymus.

Its subcellular location is the nucleus. Its function is as follows. Transcriptional activator which activates the CDKN2A/ARF locus in response to Ras-Raf signaling, thereby promoting p53/TP53-dependent growth arrest. May also cooperate with MYB to activate transcription of the ANPEP gene. Binds to the consensus sequence 5'-CCCG[GT]ATGT-3'. The chain is Cyclin-D-binding Myb-like transcription factor 1 (Dmtf1) from Mus musculus (Mouse).